A 126-amino-acid polypeptide reads, in one-letter code: Large-conductance mechanosensitive channel (126 aa).

The next 3 helical transmembrane spans lie at 14–34 (VIDL…VTSL), 40–60 (MPLL…FTFV), and 67–87 (GLFI…FLFI).

This sequence belongs to the MscL family. Homopentamer.

It is found in the cell membrane. Functionally, channel that opens in response to stretch forces in the membrane lipid bilayer. May participate in the regulation of osmotic pressure changes within the cell. In Bacillus licheniformis (strain ATCC 14580 / DSM 13 / JCM 2505 / CCUG 7422 / NBRC 12200 / NCIMB 9375 / NCTC 10341 / NRRL NRS-1264 / Gibson 46), this protein is Large-conductance mechanosensitive channel.